Reading from the N-terminus, the 391-residue chain is ATP phosphoribosyltransferase regulatory subunit (391 aa).

The protein belongs to the class-II aminoacyl-tRNA synthetase family. HisZ subfamily. As to quaternary structure, heteromultimer composed of HisG and HisZ subunits.

It is found in the cytoplasm. It functions in the pathway amino-acid biosynthesis; L-histidine biosynthesis; L-histidine from 5-phospho-alpha-D-ribose 1-diphosphate: step 1/9. In terms of biological role, required for the first step of histidine biosynthesis. May allow the feedback regulation of ATP phosphoribosyltransferase activity by histidine. This is ATP phosphoribosyltransferase regulatory subunit from Prochlorococcus marinus (strain SARG / CCMP1375 / SS120).